The sequence spans 540 residues: Chaperonin GroEL 2 (540 aa).

Residues 30-33, Lys-51, 87-91, Gly-415, 479-481, and Asp-495 each bind ATP; these read TLGP, DGTTT, and NAA.

It belongs to the chaperonin (HSP60) family. Forms a cylinder of 14 subunits composed of two heptameric rings stacked back-to-back. Interacts with the co-chaperonin GroES.

The protein resides in the cytoplasm. The catalysed reaction is ATP + H2O + a folded polypeptide = ADP + phosphate + an unfolded polypeptide.. Functionally, together with its co-chaperonin GroES, plays an essential role in assisting protein folding. The GroEL-GroES system forms a nano-cage that allows encapsulation of the non-native substrate proteins and provides a physical environment optimized to promote and accelerate protein folding. The sequence is that of Chaperonin GroEL 2 from Burkholderia vietnamiensis (strain G4 / LMG 22486) (Burkholderia cepacia (strain R1808)).